Here is a 1215-residue protein sequence, read N- to C-terminus: Zinc finger E-box-binding homeobox 2 (1215 aa).

The segment at 1–111 is disordered; sequence MKQPIMADGP…ILQASVAGPE (111 aa). A compositionally biased stretch (basic residues) spans 12–24; that stretch reads CKRRKQANPRRKN. The span at 57 to 74 shows a compositional bias: polar residues; that stretch reads DQDTSPASMPNHESSPHM. Residues 89 to 98 show a composition bias toward basic and acidic residues; sequence RESVVEHSWH. Position 142 is a phosphoserine (Ser-142). C2H2-type zinc fingers lie at residues 211 to 234, 241 to 263, and 282 to 304; these read LTCPYCDRGYKRLTSLKEHIKYRH, FSCPLCSYTFAYRTQLERHMVTH, and FKCTECGKAFKYKHHLKEHLRIH. Residues 310-334 form a C2H2-type 4; atypical zinc finger; that stretch reads YECPNCKKRFSHSGSYSSHISSKKC. Phosphoserine is present on residues Ser-356, Ser-360, and Ser-364. An N6-acetyllysine modification is found at Lys-377. Residue Lys-391 forms a Glycyl lysine isopeptide (Lys-Gly) (interchain with G-Cter in SUMO); alternate linkage. Lys-391 is covalently cross-linked (Glycyl lysine isopeptide (Lys-Gly) (interchain with G-Cter in SUMO2); alternate). Residues 437 to 487 are SMAD-MH2 binding domain; the sequence is QHLGVGMEAPLLGFPTMNSNLSEVQKVLQIVDNTVSRQKMDCKTEDISKLK. Residues Lys-479 and Lys-555 each participate in a glycyl lysine isopeptide (Lys-Gly) (interchain with G-Cter in SUMO2) cross-link. Residues 581–605 form a C2H2-type 5; degenerate zinc finger; the sequence is FSCQFCKESFPGPIPLHQHERYLCK. Residues Lys-611 and Lys-632 each participate in a glycyl lysine isopeptide (Lys-Gly) (interchain with G-Cter in SUMO2) cross-link. Positions 644–703 form a DNA-binding region, homeobox; atypical; sequence GLTSPINPYKDHMSVLKAYYAMNMEPNSDELLKISIAVGLPQEFVKEWFEQRKVYQYSNS. Residue Ser-647 is modified to Phosphoserine. 2 disordered regions span residues 702–740 and 772–811; these read NSRSPSLERTSKPLAPNSNPTTKDSLLPRSPVKPMDSIT and VDKLDHSRSNTPSPLNLSSTSSKNSHSSSYTPNSFSSEEL. Lys-713 is covalently cross-linked (Glycyl lysine isopeptide (Lys-Gly) (interchain with G-Cter in SUMO2)). Ser-731 and Ser-780 each carry phosphoserine. Over residues 780–808 the composition is skewed to low complexity; it reads SNTPSPLNLSSTSSKNSHSSSYTPNSFSS. Thr-782 carries the phosphothreonine modification. Residue Ser-784 is modified to Phosphoserine. Lys-866 is covalently cross-linked (Glycyl lysine isopeptide (Lys-Gly) (interchain with G-Cter in SUMO); alternate). Lys-866 participates in a covalent cross-link: Glycyl lysine isopeptide (Lys-Gly) (interchain with G-Cter in SUMO2); alternate. 2 C2H2-type zinc fingers span residues 999 to 1021 and 1027 to 1049; these read YACDLCDKTFQKSSSLLRHKYEH and HQCQICKKAFKHKHHLIEHSRLH. The C2H2-type 8; atypical zinc-finger motif lies at 1055 to 1076; that stretch reads YQCDKCGKRFSHSGSYSQHMNH. The disordered stretch occupies residues 1117-1215; sequence TPQGYSDSEE…EEDNMEDGME (99 aa). Ser-1122 and Ser-1124 each carry phosphoserine. Basic and acidic residues predominate over residues 1127 to 1149; it reads RESMPRDGESEKEHEKEGEEGYG. Positions 1157–1167 are enriched in acidic residues; the sequence is DEEEEEEEEES. 2 stretches are compositionally biased toward basic and acidic residues: residues 1168–1179 and 1186–1205; these read ENKSMDTDPETI and GDHSMDDSSEDGKMETKSDH. Position 1203 is a phosphoserine (Ser-1203). Over residues 1206 to 1215 the composition is skewed to acidic residues; that stretch reads EEDNMEDGME.

The protein belongs to the delta-EF1/ZFH-1 C2H2-type zinc-finger family. In terms of assembly, interacts with CBX4 and CTBP1. Binds activated SMAD1, activated SMAD2 and activated SMAD3; binding with SMAD4 is not detected. Post-translationally, sumoylation on Lys-391 and Lys-866 is promoted by the E3 SUMO-protein ligase CBX4, and impairs interaction with CTBP1 and transcription repression activity.

The protein localises to the nucleus. It localises to the chromosome. Transcriptional inhibitor that binds to DNA sequence 5'-CACCT-3' in different promoters. Represses transcription of E-cadherin. Represses expression of MEOX2. The sequence is that of Zinc finger E-box-binding homeobox 2 (Zeb2) from Mus musculus (Mouse).